We begin with the raw amino-acid sequence, 185 residues long: Acireductone dioxygenase (185 aa).

Residues His97, His99, Glu103, and His141 each contribute to the Fe(2+) site. Ni(2+)-binding residues include His97, His99, Glu103, and His141.

The protein belongs to the acireductone dioxygenase (ARD) family. In terms of assembly, monomer. The cofactor is Fe(2+). It depends on Ni(2+) as a cofactor.

It catalyses the reaction 1,2-dihydroxy-5-(methylsulfanyl)pent-1-en-3-one + O2 = 3-(methylsulfanyl)propanoate + CO + formate + 2 H(+). It carries out the reaction 1,2-dihydroxy-5-(methylsulfanyl)pent-1-en-3-one + O2 = 4-methylsulfanyl-2-oxobutanoate + formate + 2 H(+). It participates in amino-acid biosynthesis; L-methionine biosynthesis via salvage pathway; L-methionine from S-methyl-5-thio-alpha-D-ribose 1-phosphate: step 5/6. Its function is as follows. Catalyzes 2 different reactions between oxygen and the acireductone 1,2-dihydroxy-3-keto-5-methylthiopentene (DHK-MTPene) depending upon the metal bound in the active site. Fe-containing acireductone dioxygenase (Fe-ARD) produces formate and 2-keto-4-methylthiobutyrate (KMTB), the alpha-ketoacid precursor of methionine in the methionine recycle pathway. Ni-containing acireductone dioxygenase (Ni-ARD) produces methylthiopropionate, carbon monoxide and formate, and does not lie on the methionine recycle pathway. The polypeptide is Acireductone dioxygenase (Stenotrophomonas maltophilia (strain R551-3)).